The chain runs to 77 residues: Exodeoxyribonuclease 7 small subunit (77 aa).

This sequence belongs to the XseB family. In terms of assembly, heterooligomer composed of large and small subunits.

The protein resides in the cytoplasm. The enzyme catalyses Exonucleolytic cleavage in either 5'- to 3'- or 3'- to 5'-direction to yield nucleoside 5'-phosphates.. Functionally, bidirectionally degrades single-stranded DNA into large acid-insoluble oligonucleotides, which are then degraded further into small acid-soluble oligonucleotides. This chain is Exodeoxyribonuclease 7 small subunit, found in Lysinibacillus sphaericus (strain C3-41).